Reading from the N-terminus, the 294-residue chain is 33 kDa chaperonin (294 aa).

2 disulfides stabilise this stretch: Cys239–Cys241 and Cys272–Cys275.

The protein belongs to the HSP33 family. Post-translationally, under oxidizing conditions two disulfide bonds are formed involving the reactive cysteines. Under reducing conditions zinc is bound to the reactive cysteines and the protein is inactive.

The protein resides in the cytoplasm. In terms of biological role, redox regulated molecular chaperone. Protects both thermally unfolding and oxidatively damaged proteins from irreversible aggregation. Plays an important role in the bacterial defense system toward oxidative stress. In Listeria innocua serovar 6a (strain ATCC BAA-680 / CLIP 11262), this protein is 33 kDa chaperonin.